The following is a 535-amino-acid chain: Succinate-semialdehyde dehydrogenase, mitochondrial (535 aa).

The N-terminal 47 residues, 1 to 47 (MATCFWLRSCGARRLGSTFPGCRLRPRAGGLVPASGPAPGPAQLRCY), are a transit peptide targeting the mitochondrion. K126 is modified (N6-acetyllysine; alternate). K126 bears the N6-succinyllysine; alternate mark. N6-succinyllysine occurs at positions 135 and 184. NAD(+)-binding positions include R213 and 228–231 (KPAE). R213 lines the substrate pocket. K265 is modified (N6-acetyllysine; alternate). K265 bears the N6-succinyllysine; alternate mark. 284–289 (GSTTTG) is an NAD(+) binding site. Catalysis depends on E306, which acts as the Proton acceptor. R334 is a substrate binding site. C340 (nucleophile) is an active-site residue. The cysteines at positions 340 and 342 are disulfide-linked. At K365 the chain carries N6-acetyllysine. The residue at position 402 (K402) is an N6-succinyllysine. An N6-acetyllysine modification is found at K411. Residue S498 participates in substrate binding. Residue S499 is modified to Phosphoserine.

This sequence belongs to the aldehyde dehydrogenase family. As to quaternary structure, homotetramer.

The protein localises to the mitochondrion. The catalysed reaction is succinate semialdehyde + NAD(+) + H2O = succinate + NADH + 2 H(+). It participates in amino-acid degradation; 4-aminobutanoate degradation. Its activity is regulated as follows. Redox-regulated. Inhibited under oxydizing conditions. Catalyzes one step in the degradation of the inhibitory neurotransmitter gamma-aminobutyric acid (GABA). The sequence is that of Succinate-semialdehyde dehydrogenase, mitochondrial (ALDH5A1) from Hylobates lar (Lar gibbon).